A 204-amino-acid chain; its full sequence is Small ribosomal subunit protein uS4 (204 aa).

Residues 95 to 157 form the S4 RNA-binding domain; sequence RRLDNTVFRM…KGIHSIIRHN (63 aa).

The protein belongs to the universal ribosomal protein uS4 family. Part of the 30S ribosomal subunit. Contacts protein S5. The interaction surface between S4 and S5 is involved in control of translational fidelity.

One of the primary rRNA binding proteins, it binds directly to 16S rRNA where it nucleates assembly of the body of the 30S subunit. Its function is as follows. With S5 and S12 plays an important role in translational accuracy. The chain is Small ribosomal subunit protein uS4 from Treponema pallidum (strain Nichols).